We begin with the raw amino-acid sequence, 167 residues long: Peptide deformylase (167 aa).

Fe cation is bound by residues cysteine 91 and histidine 133. Residue glutamate 134 is part of the active site. Histidine 137 contacts Fe cation.

This sequence belongs to the polypeptide deformylase family. Fe(2+) is required as a cofactor.

It catalyses the reaction N-terminal N-formyl-L-methionyl-[peptide] + H2O = N-terminal L-methionyl-[peptide] + formate. Removes the formyl group from the N-terminal Met of newly synthesized proteins. Requires at least a dipeptide for an efficient rate of reaction. N-terminal L-methionine is a prerequisite for activity but the enzyme has broad specificity at other positions. This Neisseria meningitidis serogroup C (strain 053442) protein is Peptide deformylase.